The chain runs to 623 residues: Phosphoenolpyruvate carboxykinase [GTP] (623 aa).

Residues Arg-86 and 220-222 (YGG) contribute to the substrate site. Residues Lys-229 and His-248 each coordinate Mn(2+). Ser-270 serves as a coordination point for substrate. A GTP-binding site is contributed by 271–276 (MCGKTS). The active site involves Cys-272. Position 289 (Asp-289) interacts with Mn(2+). Position 384 to 386 (384 to 386 (NAR)) interacts with substrate. 2 residues coordinate GTP: Arg-386 and Arg-418.

Belongs to the phosphoenolpyruvate carboxykinase [GTP] family. Homotetramer. Requires Mn(2+) as cofactor.

The protein resides in the cytoplasm. The catalysed reaction is oxaloacetate + GTP = phosphoenolpyruvate + GDP + CO2. Its pathway is carbohydrate biosynthesis; gluconeogenesis. Functionally, involved in the gluconeogenesis. Catalyzes the conversion of oxaloacetate (OAA) to phosphoenolpyruvate (PEP), the rate-limiting step in the metabolic pathway that produces glucose from lactate and other precursors derived from the citric acid cycle. This is Phosphoenolpyruvate carboxykinase [GTP] (pckG) from Thermococcus kodakarensis (strain ATCC BAA-918 / JCM 12380 / KOD1) (Pyrococcus kodakaraensis (strain KOD1)).